A 121-amino-acid chain; its full sequence is Large ribosomal subunit protein uL18 (121 aa).

The protein belongs to the universal ribosomal protein uL18 family. Part of the 50S ribosomal subunit; part of the 5S rRNA/L5/L18/L25 subcomplex. Contacts the 5S and 23S rRNAs.

Functionally, this is one of the proteins that bind and probably mediate the attachment of the 5S RNA into the large ribosomal subunit, where it forms part of the central protuberance. The polypeptide is Large ribosomal subunit protein uL18 (Streptococcus equi subsp. zooepidemicus (strain MGCS10565)).